Reading from the N-terminus, the 118-residue chain is Cell division protein FtsB (118 aa).

The Cytoplasmic portion of the chain corresponds to 1 to 6 (MRNWRW). The helical transmembrane segment at 7–24 (LLLVLAALLSWLQHRFWF) threads the bilayer. Residues 25–118 (GPGNSGEVRM…DLAQPRREKR (94 aa)) lie on the Periplasmic side of the membrane. The stretch at 30-66 (GEVRMLQVQIVQQHQENERLRQRNASLAAEVKNLKDG) forms a coiled coil. A disordered region spans residues 97–118 (PLPNDTSADHGVDLAQPRREKR). Residues 103–118 (SADHGVDLAQPRREKR) are compositionally biased toward basic and acidic residues.

The protein belongs to the FtsB family. In terms of assembly, part of a complex composed of FtsB, FtsL and FtsQ.

The protein localises to the cell inner membrane. In terms of biological role, essential cell division protein. May link together the upstream cell division proteins, which are predominantly cytoplasmic, with the downstream cell division proteins, which are predominantly periplasmic. The chain is Cell division protein FtsB from Xylella fastidiosa (strain 9a5c).